The primary structure comprises 327 residues: Interleukin-12 subunit beta (327 aa).

The N-terminal stretch at 1 to 22 is a signal peptide; sequence MHPQQLVVSWFSLVLLASPIVA. Residues 23-106 enclose the Ig-like C2-type domain; that stretch reads IWELEKNVYI…LSRSLLLLHK (84 aa). A disulfide bond links Cys-50 and Cys-90. The N-linked (GlcNAc...) asparagine glycan is linked to Asn-223. Residues 238-327 enclose the Fibronectin type-III domain; the sequence is PPKNLQLRPL…WSEWASVSCS (90 aa).

It belongs to the IL-12B family. In terms of assembly, heterodimer with IL12A; disulfide-linked. The heterodimer is known as interleukin IL-12. Heterodimer with IL23A; disulfide-linked. The heterodimer is known as interleukin IL-23. Also secreted as a monomer. Interacts with NBR1; this interaction promotes IL-12 secretion.

The protein localises to the secreted. Functionally, cytokine that can act as a growth factor for activated T and NK cells, enhance the lytic activity of NK/lymphokine-activated killer cells, and stimulate the production of IFN-gamma by resting PBMC. This is Interleukin-12 subunit beta (IL12B) from Bubalus carabanensis (Swamp type water buffalo).